Reading from the N-terminus, the 1512-residue chain is Bifunctional glutamate/proline--tRNA ligase (1512 aa).

Residues 164-759 form a glutamate--tRNA ligase region; that stretch reads GTKWDVSGNR…SSVLYSRVAV (596 aa). Residues 204-214 carry the 'HIGH' region motif; sequence PEASGYLHIGH. Residues 294-315 form a disordered region; that stretch reads TPAEQMKAEREQRTESKHRKNS. The segment covering 299-308 has biased composition (basic and acidic residues); it reads MKAEREQRTE. Residue Lys300 is modified to N6-acetyllysine; alternate. Lys300 is subject to N6-malonyllysine; alternate. Position 355 is a phosphothreonine (Thr355). Lys417 bears the N6-acetyllysine mark. The 'KMSKS' region motif lies at 432 to 436; that stretch reads VLSKR. Residue Ser434 is modified to Phosphoserine. N6-acetyllysine is present on residues Lys498, Lys535, Lys542, and Lys637. A compositionally biased stretch (basic and acidic residues) spans 709–736; it reads EMPTSGSKEKTKVEISKKETSSAPKERP. The disordered stretch occupies residues 709-742; sequence EMPTSGSKEKTKVEISKKETSSAPKERPAPAVSS. The region spanning 749 to 805 is the WHEP-TRS 1 domain; the sequence is DSSVLYSRVAVQGDVVRELKAKKAPKEDIDAAVKQLLTLKAEYKEKTGQEYKPGNPS. The interval 760-956 is 3 X 57 AA approximate repeats; it reads QGDVVRELKA…GIEYKPVSAT (197 aa). At Lys788 the chain carries N6-acetyllysine. The disordered stretch occupies residues 795–819; sequence TGQEYKPGNPSAAAVQTVSTKSSSN. The segment covering 808–819 has biased composition (polar residues); the sequence is AVQTVSTKSSSN. Residues 822-878 form the WHEP-TRS 2 domain; sequence ESTSLYNKVAAQGEVVRKLKAEKAPKAKVTEAVECLLSLKAEYKEKTGKDYVPGQPP. Lys861 is modified (N6-acetyllysine). Disordered regions lie at residues 869–898 and 956–1011; these read GKDY…GAEK and TGAE…PKKQ. Phosphotyrosine is present on Tyr872. The span at 878-892 shows a compositional bias: polar residues; that stretch reads PASQNSHSNPVSNAQ. Residue Ser885 is modified to Phosphoserine. A WHEP-TRS 3 domain is found at 900–956; sequence EAKVLFDRVACQGEVVRKLKAEKASKDQVDSAVQELLQLKAQYKSLTGIEYKPVSAT. Residues 958 to 976 show a composition bias toward basic and acidic residues; the sequence is AEDKDKKKKEKENKSEKQN. A compositionally biased stretch (gly residues) spans 997–1006; the sequence is LSSGGAGEGQ. A Phosphoserine modification is found at Ser998. At Ser999 the chain carries Phosphoserine; by RPS6KB1. The interval 1007-1512 is proline--tRNA ligase; that stretch reads GPKKQTRLGL…KFYTLFGRSY (506 aa). L-proline contacts are provided by residues 1121-1123 and Arg1152; that span reads TSE. The ATP site is built by Arg1152, Glu1154, Arg1163, Thr1164, Gln1237, and Thr1240. Arg1152 carries the post-translational modification Omega-N-methylarginine. Mg(2+) is bound at residue Gln1237. His1242 is an L-proline binding site. ATP-binding residues include Thr1276 and Arg1278. Ser1350 carries the post-translational modification Phosphoserine. Positions 1448, 1453, 1495, and 1497 each coordinate Zn(2+). Lys1503 is modified (N6-acetyllysine).

It in the N-terminal section; belongs to the class-I aminoacyl-tRNA synthetase family. Glutamate--tRNA ligase type 2 subfamily. In the C-terminal section; belongs to the class-II aminoacyl-tRNA synthetase family. As to quaternary structure, homodimer. Part of the aminoacyl-tRNA synthetase multienzyme complex, also know as multisynthetase complex, that is composed of the tRNA ligases for Arg (RARS1), Asp (DARS1), Gln (QARS1), Ile (IARS1), Leu (LARS1), Lys (KARS1), Met (MARS1) the bifunctional ligase for Glu and Pro (EPRS1) and the auxiliary subunits AIMP1/p43, AIMP2/p38 and EEF1E1/p18. Forms a linear complex that contains MARS1, EEF1E1, EPRS1 and AIMP2 that is at the core of the multisubunit complex. Interacts with TARS3. Interacts with DUS2L. Component of the GAIT complex which is composed of EPRS1, RPL13A and GAPDH. Interacts (phosphorylated at Ser-999) with SLC27A1; mediates the translocation of SLC27A1 from the cytoplasm to the plasma membrane thereby increasing the uptake of long-chain fatty acids. Post-translationally, phosphorylated at Ser-999 by RPS6KB1; triggers EPRS1 release from the aminoacyl-tRNA synthetase multienzyme complex. In monocytes, the IFN-gamma-induced phosphorylation at Ser-999 releases EPRS1 from the aminoacyl-tRNA synthetase multienzyme complex, allowing its association with the GAIT complex. Phosphorylation at Ser-999 is specifically required for the RPL13A-mediated interaction of the GAIT complex with eIF4G. Phosphorylation at Ser-999 by RPS6KB1, is also induced by insulin through activation of the mTORC1 signaling pathway and promotes the interaction of EPRS1 with SLC27A1.

It localises to the cytoplasm. The protein localises to the cytosol. Its subcellular location is the membrane. The catalysed reaction is tRNA(Glu) + L-glutamate + ATP = L-glutamyl-tRNA(Glu) + AMP + diphosphate. It catalyses the reaction tRNA(Pro) + L-proline + ATP = L-prolyl-tRNA(Pro) + AMP + diphosphate. In terms of biological role, multifunctional protein which primarily functions within the aminoacyl-tRNA synthetase multienzyme complex, also known as multisynthetase complex. Within the complex it catalyzes the attachment of both L-glutamate and L-proline to their cognate tRNAs in a two-step reaction where the amino acid is first activated by ATP to form a covalent intermediate with AMP. Subsequently, the activated amino acid is transferred to the acceptor end of the cognate tRNA to form L-glutamyl-tRNA(Glu) and L-prolyl-tRNA(Pro). Upon interferon-gamma stimulation, EPRS1 undergoes phosphorylation, causing its dissociation from the aminoacyl-tRNA synthetase multienzyme complex. It is recruited to form the GAIT complex, which binds to stem loop-containing GAIT elements found in the 3'-UTR of various inflammatory mRNAs, such as ceruloplasmin. The GAIT complex inhibits the translation of these mRNAs, allowing interferon-gamma to redirect the function of EPRS1 from protein synthesis to translation inhibition in specific cell contexts. Furthermore, it can function as a downstream effector in the mTORC1 signaling pathway, by promoting the translocation of SLC27A1 from the cytoplasm to the plasma membrane where it mediates the uptake of long-chain fatty acid by adipocytes. Thereby, EPRS1 also plays a role in fat metabolism and more indirectly influences lifespan. The chain is Bifunctional glutamate/proline--tRNA ligase from Mus musculus (Mouse).